Here is a 224-residue protein sequence, read N- to C-terminus: MKSRNREMFKVGPIGSKQYYDKSWEEKGRNMISSIYVAFNKDSIKCIQFSYFHNGVHVVSEKHGSSKGQSYEIVRLNDDEYVTGLSGIFWERKVTSLTFHTNQGKHGPFCNGTGYSSSYMADYKKEIDVKIRDRREFGGFFGSFDDEFDGLTSIGIYVYPTYDNKPTLNQAWDPLYAFAHNQIPTIADGIPVMHIRYKPKLKDRIFSKLDFKRAMLCLIKVFLD.

Residues 8-160 enclose the Jacalin-type lectin domain; the sequence is MFKVGPIGSK…LTSIGIYVYP (153 aa).

It belongs to the jacalin lectin family.

The protein is Jacalin-related lectin 24 (JAL24) of Arabidopsis thaliana (Mouse-ear cress).